A 273-amino-acid chain; its full sequence is Protein FAM210A (273 aa).

Residues 95–116 (VLSSSSTSQETPSEKKEEPDPL) are disordered. Over residues 106-116 (PSEKKEEPDPL) the composition is skewed to basic and acidic residues. Positions 118-230 (DKSISLYQRF…GYMSTPPPVK (113 aa)) constitute a DUF1279 domain. A helical transmembrane segment spans residues 138–158 (LIPVHLITSGIWFGTFYYASI). Residues 233-272 (LQGRMEETKELISEKMEETKDRLTEKLQETKEKVSFKKKV) are a coiled coil. A disordered region spans residues 247 to 273 (KMEETKDRLTEKLQETKEKVSFKKKVE).

This sequence belongs to the FAM210 family. Interacts with ATAD3A.

The protein localises to the membrane. Its subcellular location is the mitochondrion. It localises to the cytoplasm. Functionally, may play a role in the structure and strength of both muscle and bone. The chain is Protein FAM210A (Fam210a) from Rattus norvegicus (Rat).